We begin with the raw amino-acid sequence, 186 residues long: MSDTATYTPRLRAKYTETIRAAMKEKFGYANDMMIPRLDKIVINMGVGEASQDSKKIKGALEDLEAITGQKPVKTVAKKSIAGFKLREEQVIGAKVTLRQDRMYEFLDRLITIALPRVRDFRGLNGKSFDGRGNYAMGMKEHIVFPEIDYDKVEKIRGMDIVVCTTAGNDEEAKALLAEFDFPFTN.

Belongs to the universal ribosomal protein uL5 family. In terms of assembly, part of the 50S ribosomal subunit; part of the 5S rRNA/L5/L18/L25 subcomplex. Contacts the 5S rRNA and the P site tRNA. Forms a bridge to the 30S subunit in the 70S ribosome.

This is one of the proteins that bind and probably mediate the attachment of the 5S RNA into the large ribosomal subunit, where it forms part of the central protuberance. In the 70S ribosome it contacts protein S13 of the 30S subunit (bridge B1b), connecting the 2 subunits; this bridge is implicated in subunit movement. Contacts the P site tRNA; the 5S rRNA and some of its associated proteins might help stabilize positioning of ribosome-bound tRNAs. In Maricaulis maris (strain MCS10) (Caulobacter maris), this protein is Large ribosomal subunit protein uL5.